A 131-amino-acid polypeptide reads, in one-letter code: DNA-directed RNA polymerase subunit omega (131 aa).

The protein belongs to the RNA polymerase subunit omega family. The RNAP catalytic core consists of 2 alpha, 1 beta, 1 beta' and 1 omega subunit. When a sigma factor is associated with the core the holoenzyme is formed, which can initiate transcription.

It carries out the reaction RNA(n) + a ribonucleoside 5'-triphosphate = RNA(n+1) + diphosphate. Its function is as follows. Promotes RNA polymerase assembly. Latches the N- and C-terminal regions of the beta' subunit thereby facilitating its interaction with the beta and alpha subunits. This chain is DNA-directed RNA polymerase subunit omega, found in Chelativorans sp. (strain BNC1).